A 3365-amino-acid chain; its full sequence is Probable serine/threonine-protein kinase roco9 (3365 aa).

5 disordered regions span residues 1-177 (MTSI…KSSK), 397-497 (ESTE…QPPQ), 944-985 (PIKK…GFLS), 1044-1098 (IHQQ…NNKI), and 1261-1301 (QNNL…ISKG). A compositionally biased stretch (basic and acidic residues) spans 8–27 (FDKKSKRSNEDTGEKEETKK). 4 stretches are compositionally biased toward low complexity: residues 51-84 (LQQL…SLNT), 100-116 (STNS…STRS), 137-169 (SQTS…TVKT), and 397-415 (ESTE…TLEP). The Rho-GAP domain maps to 243-437 (TPLYSLIKRQ…RLPQQSSDDN (195 aa)). A compositionally biased stretch (polar residues) spans 421–434 (PLSTSTQRLPQQSS). Low complexity-rich tracts occupy residues 435 to 445 (DDNSNNDNNNK), 457 to 489 (NNDN…QPKQ), 959 to 974 (SSPL…IPSK), 1044 to 1096 (IHQQ…NNNN), and 1262 to 1301 (NNLN…ISKG). Residues 804 to 1484 (IWDIYSPLIE…DQIILWSSFF (681 aa)) form the Myotubularin phosphatase domain. 16 LRR repeats span residues 1510–1526 (SQKL…LSYF), 1527–1549 (STLT…IILL), 1550–1572 (SNLT…LLKL), 1576–1599 (KLKL…IYTL), 1600–1622 (STLT…ISKM), 1624–1645 (QLKC…LSLC), 1646–1668 (VGLE…FFKL), 1670–1691 (SLRM…KLDD), 1697–1720 (MNEI…MFEM), 1722–1743 (SLIH…LLDN), 1744–1770 (LVNL…LFKL), 1772–1789 (VLDL…HAML), 1790–1812 (PSLK…DFNL), 1814–1835 (LLSE…IGTK), 1837–1861 (LSLT…ALLK), and 1863–1887 (LKSL…DAIL). A compositionally biased stretch (basic and acidic residues) spans 1932–1947 (SKEREKEKEKEKEKEK). Disordered stretches follow at residues 1932–1963 (SKER…DKDK), 2190–2389 (NNNN…NNGS), 2507–2567 (APST…LQTP), and 2674–2704 (SNQQ…TSIN). 4 stretches are compositionally biased toward low complexity: residues 2190–2205 (NNNN…NNNN), 2216–2389 (SINN…NNGS), 2522–2567 (NNTS…LQTP), and 2676–2688 (QQQQ…STQH). Positions 3008–3269 (ELDPNPIGEG…KKLEEIELIL (262 aa)) constitute a Protein kinase domain. Residues 3014–3022 (IGEGGTATV) and Lys3035 contribute to the ATP site. The active-site Proton acceptor is Asp3132. Over residues 3311-3333 (QQQKQQQLQQQKQSPKQLQQQKP) the composition is skewed to low complexity. The tract at residues 3311-3365 (QQQKQQQLQQQKQSPKQLQQQKPLPTPPKQLSNNDSTPTKPLDDSSDSSSEDSNN) is disordered. Acidic residues predominate over residues 3354–3365 (DSSDSSSEDSNN).

The protein belongs to the protein kinase superfamily. TKL Ser/Thr protein kinase family. ROCO subfamily.

The enzyme catalyses L-seryl-[protein] + ATP = O-phospho-L-seryl-[protein] + ADP + H(+). The catalysed reaction is L-threonyl-[protein] + ATP = O-phospho-L-threonyl-[protein] + ADP + H(+). The protein is Probable serine/threonine-protein kinase roco9 (roco9) of Dictyostelium discoideum (Social amoeba).